A 193-amino-acid chain; its full sequence is MVTLEYNANSKLITASDAVVALSTETNIDQINVLTTSLIGETNPNFTPQPNEALSKMIKGLFESGMKNLQQKKLNEALKNVSLAIEMAQRKRAPWEAFAIQLPELHFMLRSKIDLCLILGKHLEALQDLDFLLGTGLIQPDVFVRKADCLLKLRQWEEARATCERGLALAPEDMKLRALLIETARNLAEYNGE.

In terms of assembly, component of the heterotetrameric Sec62/63complex composed of SEC62, SEC63, SEC71 and SEC72. The Sec62/63 complex associates with the Sec61 complex to form the Sec complex. May interact with protein YLR301W. Part of a complex consisting of KAR2, SEC63, SEC66 and SEC72.

It is found in the cytoplasm. In terms of biological role, acts as a non-essential component of the Sec62/63 complex which is involved in SRP-independent post-translational translocation across the endoplasmic reticulum (ER) and functions together with the Sec61 complex and KAR2 in a channel-forming translocon complex. A cycle of assembly and disassembly of Sec62/63 complex from SEC61 may govern the activity of the translocon. SEC72 may be involved in signal peptide recognition for a defined subset of leader peptides, or may increase the efficiency of unusual or 'difficult' secretory precursors to the translocation pore, it may be that this protein binds charged leader peptides to the membrane until they engage the translocation apparatus. The protein is Translocation protein SEC72 (SEC72) of Saccharomyces cerevisiae (strain ATCC 204508 / S288c) (Baker's yeast).